Reading from the N-terminus, the 343-residue chain is S-adenosylmethionine:tRNA ribosyltransferase-isomerase (343 aa).

This sequence belongs to the QueA family. In terms of assembly, monomer.

It localises to the cytoplasm. The catalysed reaction is 7-aminomethyl-7-carbaguanosine(34) in tRNA + S-adenosyl-L-methionine = epoxyqueuosine(34) in tRNA + adenine + L-methionine + 2 H(+). Its pathway is tRNA modification; tRNA-queuosine biosynthesis. Its function is as follows. Transfers and isomerizes the ribose moiety from AdoMet to the 7-aminomethyl group of 7-deazaguanine (preQ1-tRNA) to give epoxyqueuosine (oQ-tRNA). This is S-adenosylmethionine:tRNA ribosyltransferase-isomerase from Syntrophotalea carbinolica (strain DSM 2380 / NBRC 103641 / GraBd1) (Pelobacter carbinolicus).